Consider the following 557-residue polypeptide: Probable phenylalanine--tRNA ligase beta subunit (557 aa).

Positions 276 to 352 constitute a B5 domain; sequence MHNRSYVMGL…IAHGFNNFRR (77 aa). Mg(2+) is bound by residues Asp330, Asp336, Glu339, and Asp340.

It belongs to the phenylalanyl-tRNA synthetase beta subunit family. Type 2 subfamily. Tetramer of two alpha and two beta subunits. Mg(2+) is required as a cofactor.

The protein resides in the cytoplasm. The enzyme catalyses tRNA(Phe) + L-phenylalanine + ATP = L-phenylalanyl-tRNA(Phe) + AMP + diphosphate + H(+). This Encephalitozoon cuniculi (strain GB-M1) (Microsporidian parasite) protein is Probable phenylalanine--tRNA ligase beta subunit.